The following is a 289-amino-acid chain: Splicing factor C9orf78 homolog (289 aa).

Disordered stretches follow at residues 1–30 (MRITGKTFRRRRADSESEEDEQESEEVRLK) and 85–111 (RGKDKVSEEEDLHLGTSFSAETNRRDE). The tract at residues 5–58 (GKTFRRRRADSESEEDEQESEEVRLKLEETREVQNLRKRPNGVSAAALLVGEKV) is interaction with SNRNP200. Ser-15 and Ser-17 each carry phosphoserine. Tyr-147 bears the Phosphotyrosine mark. Residues 232 to 283 (LNAPIRRNKEEPKARPLRVGDTEKPEPERSPPNRKRPANEKATDDYHYEKFK) are compositionally biased toward basic and acidic residues. The interval 232–289 (LNAPIRRNKEEPKARPLRVGDTEKPEPERSPPNRKRPANEKATDDYHYEKFKKMNRRY) is disordered. Phosphothreonine is present on Thr-253. Residue Ser-261 is modified to Phosphoserine.

The protein belongs to the TLS1 family. In terms of assembly, component of the spliceosome. Interacts with SNRNP200; the interaction is direct. Interacts with PRPF8.

Its subcellular location is the nucleus. It is found in the chromosome. The protein localises to the centromere. Functionally, plays a role in pre-mRNA splicing by promoting usage of the upstream 3'-splice site at alternative NAGNAG splice sites; these are sites featuring alternative acceptor motifs separated by only a few nucleotides. May also modulate exon inclusion events. PPlays a role in spliceosomal remodeling by displacing WBP4 from SNRNP200 and may act to inhibit SNRNP200 helicase activity. Binds U5 snRNA. Required for proper chromosome segregation. Not required for splicing of shelterin components. The sequence is that of Splicing factor C9orf78 homolog from Mus musculus (Mouse).